The chain runs to 155 residues: Small ribosomal subunit protein uS7c (155 aa).

It belongs to the universal ribosomal protein uS7 family. As to quaternary structure, part of the 30S ribosomal subunit.

It localises to the plastid. The protein resides in the chloroplast. In terms of biological role, one of the primary rRNA binding proteins, it binds directly to 16S rRNA where it nucleates assembly of the head domain of the 30S subunit. The sequence is that of Small ribosomal subunit protein uS7c (rps7) from Ginkgo biloba (Ginkgo).